Consider the following 435-residue polypeptide: Galactomannan galactosyltransferase 1 (435 aa).

Over 1 to 20 (MAKFGSRNKSPKWISNGCCF) the chain is Cytoplasmic. Residues 21 to 41 (LLGAFTALLLLWGLCSFIIPI) traverse the membrane as a helical; Signal-anchor for type II membrane protein segment. Residues 42-435 (PNTDPKLNSV…SPLPFGYPAA (394 aa)) lie on the Lumenal side of the membrane. N230 and N328 each carry an N-linked (GlcNAc...) asparagine glycan. Residues 321–354 (EIVKTYENISERYDEVERKVEGLRRRHAEKVSEK) adopt a coiled-coil conformation.

It belongs to the glycosyltransferase 34 family.

The protein localises to the golgi apparatus membrane. Its function is as follows. Galactomannan galactosyltransferase (GMGT) involved in galactomannan biosynthesis in seed endosperm. GMGT specificity is an important factor regulating the distribution and amount of alpha-1,6-galactose (Gal) substitution of the beta-1,4-linked mannan backbone. The polypeptide is Galactomannan galactosyltransferase 1 (GMGT1) (Cyamopsis tetragonoloba (Guar)).